We begin with the raw amino-acid sequence, 85 residues long: U4-theraphotoxin-Hhn1a (85 aa).

Residues 1–22 (MKVTLIAILTCAAVLVLHTTAE) form the signal peptide. Positions 23 to 48 (EELEAESQLMEVGMPDTELAAVDEER) are excised as a propeptide. Intrachain disulfides connect cysteine 52/cysteine 66, cysteine 56/cysteine 77, and cysteine 71/cysteine 82.

This sequence belongs to the neurotoxin 12 (Hwtx-2) family. 02 (Hwtx-2) subfamily. In terms of assembly, monomer. In terms of tissue distribution, expressed by the venom gland.

Its subcellular location is the secreted. In terms of biological role, neurotoxin active on both insects and mammals. This Cyriopagopus hainanus (Chinese bird spider) protein is U4-theraphotoxin-Hhn1a.